A 373-amino-acid polypeptide reads, in one-letter code: Carboxylesterase/phospholipase LipF (373 aa).

The Involved in the stabilization of the negatively charged intermediate by the formation of the oxyanion hole motif lies at His-116 to Gly-118. Catalysis depends on residues Ser-186, Glu-285, and His-315.

The protein belongs to the 'GDXG' lipolytic enzyme family.

The enzyme catalyses a carboxylic ester + H2O = an alcohol + a carboxylate + H(+). It carries out the reaction a 1,2-diacyl-sn-glycero-3-phosphocholine + H2O = phosphocholine + a 1,2-diacyl-sn-glycerol + H(+). In terms of biological role, a short-chain esterase and phospholipase. The protein is Carboxylesterase/phospholipase LipF of Mycobacterium tuberculosis (strain CDC 1551 / Oshkosh).